Reading from the N-terminus, the 382-residue chain is MGNSSEEPKPPTKSDKPSSPPVDQTNVHVYPDWAAMQAYYGPRVAMPPYYNSAMAASGHPPPPYMWNPQHMMSPYGAPYAAVYPHGGGVYAHPGIPMGSLPQGQKDPPLTTPGTLLSIDTPTKSTGNTDNGLMKKLKEFDGLAMSLGNGNPENGADEHKRSRNSSETDGSTDGSDGNTTGADEPKLKRSREGTPTKDGKQLVQASSFHSVSPSSGDTGVKLIQGSGAILSPGVSANSNPFMSQSLAMVPPETWLQNERELKRERRKQSNRESARRSRLRKQAETEELARKVEALTAENMALRSELNQLNEKSDKLRGANATLLDKLKCSEPEKRVPANMLSRVKNSGAGDKNKNQGDNDSNSTSKLHQLLDTKPRAKAVAAG.

Positions M1–K16 are enriched in basic and acidic residues. Disordered regions lie at residues M1–N26, M97–L221, and E257–E285. The segment covering T111 to N130 has biased composition (polar residues). The segment covering A155 to S165 has biased composition (basic and acidic residues). Positions E166–A181 are enriched in low complexity. Over residues D182–K199 the composition is skewed to basic and acidic residues. Polar residues predominate over residues V202–D216. The 64-residue stretch at E259–L322 folds into the bZIP domain. A basic motif region spans residues K261 to K280. Positions L287–L322 are leucine-zipper. The disordered stretch occupies residues S329–G382. Residues D357 to L366 are compositionally biased toward polar residues.

The protein belongs to the bZIP family. In terms of assembly, DNA-binding heterodimer. Interacts with GBF4. Interacts with BZIP16 and BZIP68. Present only in dark grown leaves and roots.

The protein localises to the nucleus. Its function is as follows. Binds to the G-box motif (5'-CCACGTGG-3') of the rbcS-1A gene promoter. G-box and G-box-like motifs are cis-acting elements defined in promoters of certain plant genes which are regulated by such diverse stimuli as light-induction or hormone control. This is G-box-binding factor 3 (GBF3) from Arabidopsis thaliana (Mouse-ear cress).